We begin with the raw amino-acid sequence, 466 residues long: Soluble pyridine nucleotide transhydrogenase (466 aa).

36–45 (EKESSVGGGC) contacts FAD.

This sequence belongs to the class-I pyridine nucleotide-disulfide oxidoreductase family. It depends on FAD as a cofactor.

It localises to the cytoplasm. The enzyme catalyses NAD(+) + NADPH = NADH + NADP(+). Functionally, conversion of NADPH, generated by peripheral catabolic pathways, to NADH, which can enter the respiratory chain for energy generation. The protein is Soluble pyridine nucleotide transhydrogenase of Vibrio cholerae serotype O1 (strain ATCC 39541 / Classical Ogawa 395 / O395).